Consider the following 455-residue polypeptide: Homeobox protein 14 (455 aa).

Composition is skewed to low complexity over residues 1–16 (MNHN…KNNS), 24–39 (SSRS…SSSG), 81–118 (TTTT…ESPN), 179–239 (ESPN…SPSF), and 263–294 (NNNN…TNNN). Disordered stretches follow at residues 1-53 (MNHN…SSIN), 67-121 (KQTK…NCNK), 178-239 (SESP…SPSF), and 258-296 (TLLS…NNGD). 2 consecutive DNA-binding regions (homeobox) follow at residues 310 to 369 (KSGQ…SKSG) and 372 to 431 (SYAK…NKLS). A disordered region spans residues 431-455 (SSKANQDNDNNNNNENNDDSYSDEG). The span at 435-445 (NQDNDNNNNNE) shows a compositional bias: low complexity. Positions 446–455 (NNDDSYSDEG) are enriched in acidic residues.

It localises to the nucleus. Putative transcription factor. This Dictyostelium discoideum (Social amoeba) protein is Homeobox protein 14 (hbx14).